A 170-amino-acid polypeptide reads, in one-letter code: Adenine phosphoribosyltransferase (170 aa).

This sequence belongs to the purine/pyrimidine phosphoribosyltransferase family. As to quaternary structure, homodimer.

The protein resides in the cytoplasm. The enzyme catalyses AMP + diphosphate = 5-phospho-alpha-D-ribose 1-diphosphate + adenine. It functions in the pathway purine metabolism; AMP biosynthesis via salvage pathway; AMP from adenine: step 1/1. Its function is as follows. Catalyzes a salvage reaction resulting in the formation of AMP, that is energically less costly than de novo synthesis. The polypeptide is Adenine phosphoribosyltransferase (Mycoplasmopsis agalactiae (strain NCTC 10123 / CIP 59.7 / PG2) (Mycoplasma agalactiae)).